The following is a 150-amino-acid chain: D-aminoacyl-tRNA deacylase (150 aa).

The Gly-cisPro motif, important for rejection of L-amino acids motif lies at 138–139 (GP).

Belongs to the DTD family. As to quaternary structure, homodimer.

The protein resides in the cytoplasm. It catalyses the reaction glycyl-tRNA(Ala) + H2O = tRNA(Ala) + glycine + H(+). It carries out the reaction a D-aminoacyl-tRNA + H2O = a tRNA + a D-alpha-amino acid + H(+). In terms of biological role, an aminoacyl-tRNA editing enzyme that deacylates mischarged D-aminoacyl-tRNAs. Also deacylates mischarged glycyl-tRNA(Ala), protecting cells against glycine mischarging by AlaRS. Acts via tRNA-based rather than protein-based catalysis; rejects L-amino acids rather than detecting D-amino acids in the active site. By recycling D-aminoacyl-tRNA to D-amino acids and free tRNA molecules, this enzyme counteracts the toxicity associated with the formation of D-aminoacyl-tRNA entities in vivo and helps enforce protein L-homochirality. The sequence is that of D-aminoacyl-tRNA deacylase from Flavobacterium johnsoniae (strain ATCC 17061 / DSM 2064 / JCM 8514 / BCRC 14874 / CCUG 350202 / NBRC 14942 / NCIMB 11054 / UW101) (Cytophaga johnsonae).